Reading from the N-terminus, the 414-residue chain is Tyrosine--tRNA ligase (414 aa).

Tyr38 is an L-tyrosine binding site. Positions 43–52 match the 'HIGH' region motif; sequence CTARSLHIGS. The L-tyrosine site is built by Tyr172 and Gln176. The 'KMSKS' region motif lies at 232-236; that stretch reads KMGKT. Lys235 lines the ATP pocket. The region spanning 345 to 412 is the S4 RNA-binding domain; it reads ISVAKLLQLA…GKKRRIKVVV (68 aa).

Belongs to the class-I aminoacyl-tRNA synthetase family. TyrS type 1 subfamily. As to quaternary structure, homodimer.

It localises to the cytoplasm. It catalyses the reaction tRNA(Tyr) + L-tyrosine + ATP = L-tyrosyl-tRNA(Tyr) + AMP + diphosphate + H(+). Its function is as follows. Catalyzes the attachment of tyrosine to tRNA(Tyr) in a two-step reaction: tyrosine is first activated by ATP to form Tyr-AMP and then transferred to the acceptor end of tRNA(Tyr). The sequence is that of Tyrosine--tRNA ligase from Anaplasma marginale (strain St. Maries).